A 270-amino-acid polypeptide reads, in one-letter code: Aquaporin-11 (270 aa).

The next 2 helical transmembrane spans lie at 5–25 and 59–79; these read IMTM…ISIC and FELG…GLFF. Positions 94–96 match the NPA 1 motif; it reads DPS. Residues 120 to 140 form a helical membrane-spanning segment; it reads IMGAAVSYRFAKIFWSFGLMA. Asn-148 carries an N-linked (GlcNAc...) asparagine glycan. A run of 2 helical transmembrane segments spans residues 153 to 173 and 184 to 204; these read ASLQ…TIVN and MLIS…VSGG. Positions 207–209 match the NPA 2 motif; that stretch reads NPT. The chain crosses the membrane as a helical span at residues 220-240; it reads GLSGPSFFLVYWFGPILGSSI.

Belongs to the MIP/aquaporin (TC 1.A.8) family.

It localises to the membrane. It carries out the reaction H2O(in) = H2O(out). In terms of biological role, probable intracellular unorthodox aquaporin that may modulate the water content and osmolytes during anhydrobiosis. This chain is Aquaporin-11, found in Milnesium tardigradum (Water bear).